The chain runs to 109 residues: MWGLLTVPAPAQARRADSSEFDPDRGWRLHPQVAVRPEPFGALLYHFGTRKLSFLKNRTILAVVQTLADYPDIRSACRGAGVDDCDQDPYLHALSVLAGSNMLVPRQTT.

It belongs to the peptide chaperone MftB family.

Its function is as follows. Peptide chaperone involved in the biosynthesis of the enzyme cofactor mycofactocin (MFT). Binds MftA and MftC with high affinity, and is essential for MftC activity on MftA, likely via the formation of a ternary complex. The chain is Peptide chaperone MftB from Mycobacterium tuberculosis (strain ATCC 25618 / H37Rv).